The sequence spans 263 residues: Glucosamine-6-phosphate deaminase (263 aa).

Asp72 functions as the Proton acceptor; for enolization step in the catalytic mechanism. Asp141 (for ring-opening step) is an active-site residue. The active-site Proton acceptor; for ring-opening step is His143. Glu148 serves as the catalytic For ring-opening step.

The protein belongs to the glucosamine/galactosamine-6-phosphate isomerase family. NagB subfamily.

The catalysed reaction is alpha-D-glucosamine 6-phosphate + H2O = beta-D-fructose 6-phosphate + NH4(+). It functions in the pathway amino-sugar metabolism; N-acetylneuraminate degradation; D-fructose 6-phosphate from N-acetylneuraminate: step 5/5. Its activity is regulated as follows. Allosterically activated by N-acetylglucosamine 6-phosphate (GlcNAc6P). In terms of biological role, catalyzes the reversible isomerization-deamination of glucosamine 6-phosphate (GlcN6P) to form fructose 6-phosphate (Fru6P) and ammonium ion. The protein is Glucosamine-6-phosphate deaminase of Porphyromonas gingivalis (strain ATCC 33277 / DSM 20709 / CIP 103683 / JCM 12257 / NCTC 11834 / 2561).